A 396-amino-acid chain; its full sequence is Stearoyl-[acyl-carrier-protein] 9-desaturase, chloroplastic (396 aa).

The transit peptide at 1–32 directs the protein to the chloroplast; it reads MALKLNPVTTFPSTRSLNNFSSRSPRTFLMAA. Fe cation-binding residues include Glu-138, Glu-176, His-179, Glu-229, Glu-262, and His-265.

The protein belongs to the fatty acid desaturase type 2 family. Homodimer. The cofactor is Fe(2+).

Its subcellular location is the plastid. It is found in the chloroplast. The catalysed reaction is octadecanoyl-[ACP] + 2 reduced [2Fe-2S]-[ferredoxin] + O2 + 2 H(+) = (9Z)-octadecenoyl-[ACP] + 2 oxidized [2Fe-2S]-[ferredoxin] + 2 H2O. The protein operates within lipid metabolism; fatty acid metabolism. In terms of biological role, converts stearoyl-ACP to oleoyl-ACP by introduction of a cis double bond between carbons 9 and 10 of the acyl chain. This Linum usitatissimum (Flax) protein is Stearoyl-[acyl-carrier-protein] 9-desaturase, chloroplastic.